Consider the following 109-residue polypeptide: UPF0122 protein CLH_1195 (109 aa).

This sequence belongs to the UPF0122 family.

Functionally, might take part in the signal recognition particle (SRP) pathway. This is inferred from the conservation of its genetic proximity to ftsY/ffh. May be a regulatory protein. This is UPF0122 protein CLH_1195 from Clostridium botulinum (strain Alaska E43 / Type E3).